The following is a 326-amino-acid chain: Metal-binding protein YtgA (326 aa).

The N-terminal stretch at 1–21 (MSFFHTRKYKLILRGLLCLAG) is a signal peptide. H75, H141, H207, and D299 together coordinate Fe(2+).

The protein belongs to the bacterial solute-binding protein 9 family. In terms of assembly, monomer.

Its subcellular location is the periplasm. Its function is as follows. Part of the ATP-binding cassette (ABC) transport system YtgABCD involved in metal import. Binds Fe(2+), Mn(2+) and Ni(2+), with a preference for Fe(2+) and delivers them to the membrane permease for translocation into the cytoplasm. This Chlamydia trachomatis serovar D (strain ATCC VR-885 / DSM 19411 / UW-3/Cx) protein is Metal-binding protein YtgA.